Consider the following 60-residue polypeptide: Cytotoxin 1 (60 aa).

4 cysteine pairs are disulfide-bonded: cysteine 3/cysteine 21, cysteine 14/cysteine 38, cysteine 42/cysteine 53, and cysteine 54/cysteine 59.

This sequence belongs to the three-finger toxin family. Short-chain subfamily. Type IA cytotoxin sub-subfamily. In terms of assembly, monomer in solution; Homodimer and oligomer in the presence of negatively charged lipids forming a pore with a size ranging between 20 and 30 Angstroms. As to expression, expressed by the venom gland.

Its subcellular location is the secreted. The protein localises to the target cell membrane. Its function is as follows. Shows cytolytic activity on many different cells by forming pore in lipid membranes. In vivo, increases heart rate or kills the animal by cardiac arrest. In addition, it binds to heparin with high affinity, interacts with Kv channel-interacting protein 1 (KCNIP1) in a calcium-independent manner, and binds to integrin alpha-V/beta-3 (ITGAV/ITGB3) with moderate affinity. The chain is Cytotoxin 1 from Naja melanoleuca (Forest cobra).